The primary structure comprises 629 residues: MPKAVGIDLGTTNSVIATMEGGRPEVIVNAEGARTTPSVVAYKGDERLVGQIARRQAALNPKATLFEVKRFIGRRWDEVKEEAARMPFTVKEGPGGSVRIEVNGKDLAPEQVSAEVLRKLVADASAKLGEKITDAVITVPAYFDNSQREATKQAGEIAGLNVLRVINEPTAAALAYGLERKGNETVLVFDLGGGTFDVTILELGEGVFEVRSTAGDTHLGGADFDQRIVNWLAEEFRKEHNFDLRKDPQALQRLIEAAERAKIELSNASETTISLPFITFDPETRTPLHLERTLSRAKFEELTADLLRRVRQPVEQALADAKLSASDIDEVILVGGSTRIPAVKRIVKEITGKEPNESVNPDEAVALGAAVQAGIIQGDANLGDIVLVDVTPLTLGVEVKGGMVAPMIPRNTTIPAKKTEIYTTAENNQPGVEIVVLQGERPMAADNKSLGRFKLEGIPPMPAGRPQIEVTFDIDANGILHVTAKEKTSGKEASIRIENTTTLDKSDVERMVKEAEQNAEADRKRRERVEKRNNLDSLRVQALGQLEENQSAPQDAKDRLKAAADEAEEAVRSDDDSRIERAQKQLEEAMRSFMTAAQSGSQNQAGQGAQTQTGRQEDDVIDADFKPAE.

At threonine 195 the chain carries Phosphothreonine; by autocatalysis. Disordered regions lie at residues 514 to 533 and 543 to 629; these read EAEQ…EKRN and LGQL…KPAE. Residues 555–590 show a composition bias toward basic and acidic residues; that stretch reads DAKDRLKAAADEAEEAVRSDDDSRIERAQKQLEEAM. Over residues 595–614 the composition is skewed to low complexity; that stretch reads TAAQSGSQNQAGQGAQTQTG. The segment covering 615–629 has biased composition (basic and acidic residues); the sequence is RQEDDVIDADFKPAE.

Belongs to the heat shock protein 70 family.

In terms of biological role, acts as a chaperone. The chain is Chaperone protein DnaK from Deinococcus geothermalis (strain DSM 11300 / CIP 105573 / AG-3a).